Reading from the N-terminus, the 124-residue chain is Urease subunit beta (124 aa).

This sequence belongs to the urease beta subunit family. In terms of assembly, heterotrimer of UreA (gamma), UreB (beta) and UreC (alpha) subunits. Three heterotrimers associate to form the active enzyme.

It localises to the cytoplasm. The catalysed reaction is urea + 2 H2O + H(+) = hydrogencarbonate + 2 NH4(+). It functions in the pathway nitrogen metabolism; urea degradation; CO(2) and NH(3) from urea (urease route): step 1/1. The chain is Urease subunit beta from Halalkalibacterium halodurans (strain ATCC BAA-125 / DSM 18197 / FERM 7344 / JCM 9153 / C-125) (Bacillus halodurans).